Reading from the N-terminus, the 27-residue chain is Dermaseptin-like peptide (27 aa).

In terms of biological role, has antimicrobial activity against the Gram-positive bacterium M.luteus and the yeast C.albicans. Has hemolytic activity on human and duck erythrocytes. The sequence is that of Dermaseptin-like peptide from Schistosoma mansoni (Blood fluke).